The chain runs to 393 residues: Sister chromatid cohesion protein DCC1 (393 aa).

It belongs to the DCC1 family. Component of the CTF18-RFC complex which consists of CTF8, CTF18, DSCC1 and the RFC complex. Interacts with CTF8 and CTF18. Interacts with DDX11.

It localises to the nucleus. In terms of biological role, loads PCNA onto primed templates regulating velocity, spacing and restart activity of replication forks. May couple DNA replication to sister chromatid cohesion through regulation of the acetylation of the cohesin subunit SMC3. The protein is Sister chromatid cohesion protein DCC1 (DSCC1) of Homo sapiens (Human).